The sequence spans 133 residues: Small ribosomal subunit protein uS11 (133 aa).

The protein belongs to the universal ribosomal protein uS11 family. Part of the 30S ribosomal subunit. Interacts with proteins S7 and S18. Binds to IF-3.

Located on the platform of the 30S subunit, it bridges several disparate RNA helices of the 16S rRNA. Forms part of the Shine-Dalgarno cleft in the 70S ribosome. The protein is Small ribosomal subunit protein uS11 of Shouchella clausii (strain KSM-K16) (Alkalihalobacillus clausii).